A 66-amino-acid polypeptide reads, in one-letter code: ATP synthase protein 8 (66 aa).

A helical transmembrane segment spans residues 8–24; sequence PWPMVIMSMILTLFYIT. Lysine 54 bears the N6-acetyllysine; alternate mark. Lysine 54 is subject to N6-succinyllysine; alternate. Lysine 57 carries the N6-acetyllysine modification.

The protein belongs to the ATPase protein 8 family. In terms of assembly, F-type ATPases have 2 components, CF(1) - the catalytic core - and CF(0) - the membrane proton channel. Component of an ATP synthase complex composed of ATP5PB, ATP5MC1, ATP5F1E, ATP5PD, ATP5ME, ATP5PF, ATP5MF, MT-ATP6, MT-ATP8, ATP5F1A, ATP5F1B, ATP5F1D, ATP5F1C, ATP5PO, ATP5MG, ATP5MK and ATP5MJ. Interacts with PRICKLE3.

It localises to the mitochondrion membrane. Its function is as follows. Mitochondrial membrane ATP synthase (F(1)F(0) ATP synthase or Complex V) produces ATP from ADP in the presence of a proton gradient across the membrane which is generated by electron transport complexes of the respiratory chain. F-type ATPases consist of two structural domains, F(1) - containing the extramembraneous catalytic core and F(0) - containing the membrane proton channel, linked together by a central stalk and a peripheral stalk. During catalysis, ATP synthesis in the catalytic domain of F(1) is coupled via a rotary mechanism of the central stalk subunits to proton translocation. Part of the complex F(0) domain. Minor subunit located with subunit a in the membrane. This is ATP synthase protein 8 (MT-ATP8) from Alouatta guariba (Brown howler monkey).